Here is a 512-residue protein sequence, read N- to C-terminus: Aldehyde dehydrogenase B (512 aa).

Catalysis depends on residues Glu268 and Cys307.

In terms of assembly, homotetramer.

The catalysed reaction is an aldehyde + NADP(+) + H2O = a carboxylate + NADPH + 2 H(+). It catalyses the reaction acetaldehyde + NADP(+) + H2O = acetate + NADPH + 2 H(+). It carries out the reaction chloroacetaldehyde + NADP(+) + H2O = chloroacetate + NADPH + 2 H(+). The enzyme catalyses propanal + NADP(+) + H2O = propanoate + NADPH + 2 H(+). Its activity is regulated as follows. Magnesium increases enzyme activity with various substrates. Its function is as follows. Catalyzes the NADP(+)-dependent oxidation of diverse aldehydes to their corresponding carboxylic acids, with a preference for acetaldehyde and chloroacetaldehyde. May play a role in detoxifying aldehydes present during stationary phase. Cannot use NAD(+) instead of NADP(+) as the electron acceptor. To a lesser extent is also able to oxidize propionaldehyde (propanal), benzaldehyde, mafosfamide, and 4-hydroperoxycyclophosphamide. Does not use either glyceraldehyde or glycolaldehyde as substrates. The protein is Aldehyde dehydrogenase B of Escherichia coli (strain K12).